The following is a 200-amino-acid chain: MGRPRTSQTRGQGPSGATGGNPRGGGSTTRERDARGARPGERDGGSEIQDRVVQIRRVAKVKKGGRRLNFSALVVVGDGQGRVGVGLGKANTVPAAIAKGQEKARHAMFDVPMRNTTIPHEVVGEYESSRVLLKPASEGTGVIAGGGVRAVLELAGIKDVLTKALGSTTPVNLVRATEDGLRQLRTKAQIEQIRGVKVRL.

The span at 1–12 (MGRPRTSQTRGQ) shows a compositional bias: polar residues. The disordered stretch occupies residues 1–49 (MGRPRTSQTRGQGPSGATGGNPRGGGSTTRERDARGARPGERDGGSEIQ). Gly residues predominate over residues 13 to 27 (GPSGATGGNPRGGGS). The segment covering 29 to 49 (TRERDARGARPGERDGGSEIQ) has biased composition (basic and acidic residues). The region spanning 48–111 (IQDRVVQIRR…EKARHAMFDV (64 aa)) is the S5 DRBM domain.

Belongs to the universal ribosomal protein uS5 family. As to quaternary structure, part of the 30S ribosomal subunit. Contacts proteins S4 and S8.

In terms of biological role, with S4 and S12 plays an important role in translational accuracy. Its function is as follows. Located at the back of the 30S subunit body where it stabilizes the conformation of the head with respect to the body. The chain is Small ribosomal subunit protein uS5 from Rubrobacter xylanophilus (strain DSM 9941 / JCM 11954 / NBRC 16129 / PRD-1).